The chain runs to 2410 residues: MEQTLAQAVSRRNKTDTPMAEERKHFSPMNFSANFVAPELFYSANVRKIKNIFKERSTTRFLDAISSDFELVAFLTLSPAHLMQLETVLRQEMRSCAVPIVTSDASFETVAVIKTALDGMRFHFGYTTLEKGWISMMRHAESCLQESSSSAVNDLQTPIKRVGSLLLSGKNRVEGCELSVLNLTARRFRIEYGLNGTYFGEHVAMLRDLKRYIYGTVPKEFLWAKTKKHLPFTIPAWITRTPIDCFLFCLRVIPILHRFGVAMSLIYFSCVAALNFPAFMGFLFKRQFAKYLAHSFAKHSIYFMFLTIVAILWSFRTFTSQKPKIVLQARSTAEKEKKLMMILASVVGITYLFDYDIAEALGNCLHKISRLSSYLLDDHQGIASRMFGASYGLQAGDSAEDAVTTIISDLLSVTFKIVDEDASQGTVEDASETTFHSWVGVNTLAGRNMSRPLQYSVNKTYALTPQNVQLQARAMADANNCWSMVVGHTGSGKSTYLPVQYSNYLSTKSDRRQQILICEPTQAATENVCAGVAANLGRAVYGRHEGWSRMGDHCIQVMTYGSALQCHAMDPSFISTFDAIFLDEAHDVKEHSLVFESICDTFKSVRKFYVSATPRDGSVCPEAARKYPLHVETSVCDSYRKFIAAQGGGDLLDISKHDTALVFLAGRPECIKAANAWNASVTGEKRAFSLSSDNFATDFSMLTERLKTHKTIIFTTNIIETGVTLSVDCVVDFGHTMRPCLDLNQKSLRLDRRKVTRNERQQRIGPTGRLKDGYAIVCGDVDRAVNVISPDVLYGAALLSFKHNVPFYMNETFESSWLKGVTKAQADTMTIFKLPIFLTRDLINADGSVAKEFLDVLKKHQFTTSDIKQAPSITAKHIFPTWASYFSLHQALHYGDDKDEIPHELRYARVPFSVTTLSKFDWPALALACEKHRASMSNVFAGIEEPARVVTLQTNPANIQASITHLMHMSKNYKTLIENNQHVRQSMMTNVMYKWFSSTRITKDLDRNLRRCTDNLAVVEATLSSLRQILAGNTQVHATPHMQSTLEDIIGLQASDTLTEESLASALGIFVPKSNLFLLLATKGFKLVYVICILLLVNLVYIGLRKWREHLKQKGSDEILTNTMPVSEGGEILAEVMKMEPKMRKNIKRDMDEAVESKLCGFTFVFPDDDKIGLEGKGNKYRPREDARLMYSTREDATFDAWNEKAKERRKKVTDKSEPELRRAYEKRPYFNFYDLQTDSNILEAIFYTTEGDEFFRTADPNKDMNLVADKLRSFLDTKLVVGHHQRKLLEETAQVVIKDTKGTAHKMEISQHDPDCLKQNGSGKVGYPEHRGQFRQEGVAITSDYDLGVEFGTDTDNITLEASTGILLSQVGVDVATRVGRISIGTFNMNCYFYNDWILVPGHLQDRSGNVTIQFPDQTVQTTTDALNANGVKRFYGLDVIAIRRPAILRPRTKLVKAFAIEEPVIAQMVFVDAQGVRKFTQSDWARKGENSGRWSHKISTVLGMCGCQFWTLERQIDGIHVATNYTKKRNEFQPFTQEVVDFINGPGTKIPYCPWVFDRPACGYASHTALFEKPTTLTDVIHMQASDGLHNINNAIEGFGSSLRGQLVSPPTESTRQRFDKLFGSGSFELIGQMNKGLIDKHVIVGENDDVYDFMREHPTFTWLKDFMNEYAPSVLSYSAYYKDLCKYNRAKHVLTYNPEELHYATKGLIKMLEDAGLTQGSVRTPQQVISDIQWNTSAGPSYQGKKRDLCAHLSDDEVLHLAEVCRQQFLEGKSTGVWNGSLKAELRTIEKVEPEKTRVFTASPITSLFAMKFYVDDFNKKFYATNLKAPHTVGINKFGRGWERLHDKLNRPGWLHGSGDGSRFDSSIDPFFFDVVKTIRKHFLPSEHHKAIDLIYDEILNTTICLANGMVIKKNVGTQRQPSTVVDNTLVLMTAFLYAYIHKTGDRELALLNERFIFVCNGDDNKFAISPQFDEEFGHDFSPELVELGLTYEFDDITSDICENPYMSLTMVKTPFGVGFSLPVERIIAIMQWSKKGGVLHSYLAGISAIYESFNTPKLFKSIYAYLLWLTEEHEAEILAAMTQSSTALPIPSMLDVYRLHYGDDEIWLQAADPLTDAQKEAAHTAAADRARLDLADADRRRKVEADRVEAARVKKAADAALKPVNLTATRMPTEDDGKLKTPSGARIPSSAADGNWSVPATKQVNAGLTLKIPLNKLKSVPKSVMEHNNSVALESELKAWTDAVRTSLGITTDEAWIDALIPFIGWCCNNGTSDKHAENQVMQIDSGKGAVTEMSLSPFIVHARMNGGLRRIMRNYSDETVLLITNNKLVAHWSMKHGASANAKYAFDFFVPRSWMNPQDIEVSKQARLAALGTGTYNTMLTSDTTNLRKTTNHRVLDSDGHPELT.

The interval 1–21 is disordered; that stretch reads MEQTLAQAVSRRNKTDTPMAE. The region spanning 474–632 is the Helicase ATP-binding domain; sequence AMADANNCWS…AARKYPLHVE (159 aa). Residue 487-494 participates in ATP binding; sequence GHTGSGKS. Residues 583–586 carry the DEAH box motif; it reads DEAH. Residues 647-813 form the Helicase C-terminal domain; it reads GGGDLLDISK…NVPFYMNETF (167 aa). Tyr1234 bears the O-(5'-phospho-RNA)-tyrosine mark. In terms of domain architecture, Peptidase C4 spans 1359–1573; it reads ITLEASTGIL…CGYASHTALF (215 aa). Residues His1404, Asp1440, and Cys1507 each act as for nuclear inclusion protein A activity in the active site. One can recognise a RdRp catalytic domain in the interval 1857–1980; it reads WLHGSGDGSR…AISPQFDEEF (124 aa). The segment at 2175–2200 is disordered; the sequence is MPTEDDGKLKTPSGARIPSSAADGNW.

Belongs to the bymoviruses polyprotein 1 family. Post-translationally, VPg is uridylylated by the polymerase and is covalently attached to the 5'-end of the genomic RNA. This uridylylated form acts as a nucleotide-peptide primer for the polymerase. The viral RNA1 of bymoviruses is expressed as a single polyprotein which undergoes post-translational proteolytic processing by the main proteinase NIa-pro resulting in the production of at least eight individual proteins.

It localises to the host cytoplasmic vesicle. It is found in the virion. It carries out the reaction RNA(n) + a ribonucleoside 5'-triphosphate = RNA(n+1) + diphosphate. The catalysed reaction is Hydrolyzes glutaminyl bonds, and activity is further restricted by preferences for the amino acids in P6 - P1' that vary with the species of potyvirus, e.g. Glu-Xaa-Xaa-Tyr-Xaa-Gln-|-(Ser or Gly) for the enzyme from tobacco etch virus. The natural substrate is the viral polyprotein, but other proteins and oligopeptides containing the appropriate consensus sequence are also cleaved.. In terms of biological role, indispensable for virus replication. Its function is as follows. Mediates the cap-independent, EIF4E-dependent translation of viral genomic RNAs. Binds to the cap-binding site of host EIF4E and thus interferes with the host EIF4E-dependent mRNA export and translation. VPg-RNA directly binds EIF4E and is a template for transcription. Also forms trimeric complexes with EIF4E-EIF4G, which are templates for translation. Has RNA-binding and proteolytic activities. Functionally, an RNA-dependent RNA polymerase that plays an essential role in the virus replication. This Hordeum vulgare (Barley) protein is Genome polyprotein 1.